A 97-amino-acid chain; its full sequence is Co-chaperonin GroES (97 aa).

It belongs to the GroES chaperonin family. As to quaternary structure, heptamer of 7 subunits arranged in a ring. Interacts with the chaperonin GroEL.

The protein resides in the cytoplasm. Its function is as follows. Together with the chaperonin GroEL, plays an essential role in assisting protein folding. The GroEL-GroES system forms a nano-cage that allows encapsulation of the non-native substrate proteins and provides a physical environment optimized to promote and accelerate protein folding. GroES binds to the apical surface of the GroEL ring, thereby capping the opening of the GroEL channel. This chain is Co-chaperonin GroES, found in Pseudomonas entomophila (strain L48).